Consider the following 164-residue polypeptide: ATP synthase subunit b 2 (164 aa).

A helical membrane pass occupies residues 4-24; the sequence is TFWAFVGLVLFLALLVYFEVP.

Belongs to the ATPase B chain family. As to quaternary structure, F-type ATPases have 2 components, F(1) - the catalytic core - and F(0) - the membrane proton channel. F(1) has five subunits: alpha(3), beta(3), gamma(1), delta(1), epsilon(1). F(0) has three main subunits: a(1), b(2) and c(10-14). The alpha and beta chains form an alternating ring which encloses part of the gamma chain. F(1) is attached to F(0) by a central stalk formed by the gamma and epsilon chains, while a peripheral stalk is formed by the delta and b chains.

It is found in the cell inner membrane. In terms of biological role, f(1)F(0) ATP synthase produces ATP from ADP in the presence of a proton or sodium gradient. F-type ATPases consist of two structural domains, F(1) containing the extramembraneous catalytic core and F(0) containing the membrane proton channel, linked together by a central stalk and a peripheral stalk. During catalysis, ATP synthesis in the catalytic domain of F(1) is coupled via a rotary mechanism of the central stalk subunits to proton translocation. Component of the F(0) channel, it forms part of the peripheral stalk, linking F(1) to F(0). The protein is ATP synthase subunit b 2 of Bartonella henselae (strain ATCC 49882 / DSM 28221 / CCUG 30454 / Houston 1) (Rochalimaea henselae).